Consider the following 488-residue polypeptide: Lysine--tRNA ligase (488 aa).

Mg(2+) is bound by residues Glu-398 and Glu-405.

It belongs to the class-II aminoacyl-tRNA synthetase family. Homodimer. Requires Mg(2+) as cofactor.

The protein localises to the cytoplasm. It carries out the reaction tRNA(Lys) + L-lysine + ATP = L-lysyl-tRNA(Lys) + AMP + diphosphate. This is Lysine--tRNA ligase from Carboxydothermus hydrogenoformans (strain ATCC BAA-161 / DSM 6008 / Z-2901).